Reading from the N-terminus, the 60-residue chain is UPF0434 protein YPA_0693 (60 aa).

The protein belongs to the UPF0434 family.

The chain is UPF0434 protein YPA_0693 from Yersinia pestis bv. Antiqua (strain Antiqua).